Reading from the N-terminus, the 147-residue chain is Large ribosomal subunit protein mL40 (147 aa).

A mitochondrion-targeting transit peptide spans 1 to 26 (MLAQTFKKPHRAVLEQVSGTTVFIRN).

Belongs to the mitochondrion-specific ribosomal protein mL40 family. As to quaternary structure, component of the mitochondrial large ribosomal subunit (mt-LSU). Mature yeast 74S mitochondrial ribosomes consist of a small (37S) and a large (54S) subunit. The 37S small subunit contains a 15S ribosomal RNA (15S mt-rRNA) and 34 different proteins. The 54S large subunit contains a 21S rRNA (21S mt-rRNA) and 46 different proteins.

It localises to the mitochondrion. Functionally, component of the mitochondrial ribosome (mitoribosome), a dedicated translation machinery responsible for the synthesis of mitochondrial genome-encoded proteins, including at least some of the essential transmembrane subunits of the mitochondrial respiratory chain. The mitoribosomes are attached to the mitochondrial inner membrane and translation products are cotranslationally integrated into the membrane. The sequence is that of Large ribosomal subunit protein mL40 (MRPL28) from Saccharomyces cerevisiae (strain ATCC 204508 / S288c) (Baker's yeast).